Reading from the N-terminus, the 664-residue chain is MEPLYQYAWLIPVLPLLGAMVIGIGLISLNKFTNKLRQLNAVFVLSLIGTSMALSFGLLWSQIQGHEAFTYTLEWAAAGDFHLQMGYTVDHLSALMSVIVTTVALLVMIYTDGYMAHDPGYVRFYAYLSIFSSSMLGLVFSPNLVQVYIFWELVGMCSYLLIGFWYDRKAAADACQKAFVTNRVGDFGLLLGMLGLYWATGSFEFDLMGDRLMDLVSTGQISSLLAIVFAVLVFLGPVAKSAQFPLHVWLPDAMEGPTPISALIHAATMVAAGVFLVARMYPVFEPIPEAMNVIAWTGATTAFLGATIALTQNDIKKGLAYSTMSQLGYMVMAMGIGGYTAGLFHLMTHAYFKAMLFLGSGSVIHGMEEVVGHNAVLAQDMRLMGGLRKYMPITATTFLIGTLAICGIPPFAGFWSKDEILGLAFEANPVLWFIGWATAGMTAFYMFRMYFLTFEGEFRGTDQQLQEKLLTAAGQAPEEGHHGSKPHESPLTMTFPLMALAVPSVLIGLLGVPWGNRFEAFVFSPNEAAEAAEHGFELTEFLIMGGNSVGIALIGITIASLMYLQQRIDPARLAEKFPVLYQLSLNKWYFDDIYNNVFVMGTRRLARQILEVDYRVVDGAVNLTGIATLLSGEGLKYIENGRVQFYALIVFGAVLGFVIFFSVA.

16 consecutive transmembrane segments (helical) span residues 7-27, 39-59, 91-111, 120-140, 144-164, 187-207, 219-239, 258-278, 290-310, 327-347, 352-372, 395-415, 420-440, 495-515, 541-561, and 643-663; these read YAWLIPVLPLLGAMVIGIGLI, LNAVFVLSLIGTSMALSFGLL, HLSALMSVIVTTVALLVMIYT, GYVRFYAYLSIFSSSMLGLVF, LVQVYIFWELVGMCSYLLIGF, FGLLLGMLGLYWATGSFEFDL, GQISSLLAIVFAVLVFLGPVA, TPISALIHAATMVAAGVFLVA, AMNVIAWTGATTAFLGATIAL, LGYMVMAMGIGGYTAGLFHLM, FKAMLFLGSGSVIHGMEEVVG, ATTFLIGTLAICGIPPFAGFW, ILGLAFEANPVLWFIGWATAG, FPLMALAVPSVLIGLLGVPWG, FLIMGGNSVGIALIGITIASL, and VQFYALIVFGAVLGFVIFFSV.

It belongs to the complex I subunit 5 family.

Its subcellular location is the cell membrane. The enzyme catalyses a plastoquinone + NADH + (n+1) H(+)(in) = a plastoquinol + NAD(+) + n H(+)(out). The catalysed reaction is a plastoquinone + NADPH + (n+1) H(+)(in) = a plastoquinol + NADP(+) + n H(+)(out). In terms of biological role, NDH-1 shuttles electrons from NAD(P)H, via FMN and iron-sulfur (Fe-S) centers, to quinones in the respiratory chain. The immediate electron acceptor for the enzyme in this species is believed to be plastoquinone. Couples the redox reaction to proton translocation (for every two electrons transferred, four hydrogen ions are translocated across the cytoplasmic membrane), and thus conserves the redox energy in a proton gradient. The sequence is that of NAD(P)H-quinone oxidoreductase chain 5 (ndhF) from Picosynechococcus sp. (strain ATCC 27264 / PCC 7002 / PR-6) (Agmenellum quadruplicatum).